The sequence spans 170 residues: dCTP pyrophosphatase 1 (170 aa).

Positions 1–27 (MSVAGGEIRGDTGGEDTAAPGRFSFSP) are disordered. The residue at position 2 (S2) is an N-acetylserine. S2 carries the phosphoserine modification. Phosphothreonine is present on T12. Residues H38 and 47-51 (WEQFH) contribute to the substrate site. Mg(2+) contacts are provided by E63 and E66. W73 provides a ligand contact to substrate. Position 85 is a phosphoserine (S85). Residues E95 and D98 each contribute to the Mg(2+) site. Y102 contacts substrate. Residues 147–170 (GAISEDQAVGPADIPCDSTGQTST) form a disordered region.

Homotetramer. Mg(2+) serves as cofactor.

The protein localises to the mitochondrion. It localises to the nucleus. The protein resides in the cytoplasm. It is found in the cytosol. It catalyses the reaction dCTP + H2O = dCMP + diphosphate + H(+). Inhibited by the reaction end product PPi. Inhibited by dCDP. Inhibited by triptolide. In terms of biological role, hydrolyzes deoxynucleoside triphosphates (dNTPs) to the corresponding nucleoside monophosphates. Has a strong preference for dCTP and its analogs including 5-iodo-dCTP and 5-methyl-dCTP for which it may even have a higher efficiency. May protect DNA or RNA against the incorporation of these genotoxic nucleotide analogs through their catabolism. The sequence is that of dCTP pyrophosphatase 1 from Homo sapiens (Human).